The chain runs to 313 residues: MKNYQFSTALLSSQIQGKKLRFPCPAKINLFLYITSQRSDGYHELQTLFQFLNFGDWLSIEIRTDGKIILTPEIPHLKNEDNLIYRAAKLLQQKTGCTLGANLHLDKILPIGGGVGGGSSNAATALVALNYLWNTQLSLSTLAEIGLQLGADVPVFVYGKAAFAEGVGEKLTFCQPPQKWFLVLKPETSISTAIIFKDSNLPRNTSKRPLAELLTTKYENDCEKVVLNHYSEVEEALGWLLQYAPARLTGTGACVFAEFANEQAAQSAFLDKPEKYVGFVAQGTNISPLHQMIEYLSQQKQTLCLPNNTNSRG.

The active site involves K27. Residue 110–120 participates in ATP binding; sequence PIGGGVGGGSS. D152 is an active-site residue.

The protein belongs to the GHMP kinase family. IspE subfamily.

It catalyses the reaction 4-CDP-2-C-methyl-D-erythritol + ATP = 4-CDP-2-C-methyl-D-erythritol 2-phosphate + ADP + H(+). It participates in isoprenoid biosynthesis; isopentenyl diphosphate biosynthesis via DXP pathway; isopentenyl diphosphate from 1-deoxy-D-xylulose 5-phosphate: step 3/6. Its function is as follows. Catalyzes the phosphorylation of the position 2 hydroxy group of 4-diphosphocytidyl-2C-methyl-D-erythritol. The sequence is that of 4-diphosphocytidyl-2-C-methyl-D-erythritol kinase from Histophilus somni (strain 2336) (Haemophilus somnus).